We begin with the raw amino-acid sequence, 492 residues long: N-succinylglutamate 5-semialdehyde dehydrogenase (492 aa).

Residue 220–225 coordinates NAD(+); the sequence is GSANTG. Catalysis depends on residues E243 and C277.

This sequence belongs to the aldehyde dehydrogenase family. AstD subfamily.

It catalyses the reaction N-succinyl-L-glutamate 5-semialdehyde + NAD(+) + H2O = N-succinyl-L-glutamate + NADH + 2 H(+). The protein operates within amino-acid degradation; L-arginine degradation via AST pathway; L-glutamate and succinate from L-arginine: step 4/5. Functionally, catalyzes the NAD-dependent reduction of succinylglutamate semialdehyde into succinylglutamate. This Escherichia coli O6:K15:H31 (strain 536 / UPEC) protein is N-succinylglutamate 5-semialdehyde dehydrogenase.